The primary structure comprises 324 residues: Spheroidene monooxygenase (324 aa).

The disordered stretch occupies residues 226–324; the sequence is GKDPVGEALT…PGKGGRKENA (99 aa). Composition is skewed to low complexity over residues 248-278 and 287-313; these read PAAA…VEMP and VVEA…NFKG.

This sequence belongs to the CrtA family. It depends on heme as a cofactor.

It catalyses the reaction spheroidene + 4 reduced [2Fe-2S]-[ferredoxin] + 2 O2 + 4 H(+) = spheroiden-2-one + 4 oxidized [2Fe-2S]-[ferredoxin] + 3 H2O. The enzyme catalyses spheroidene + 2 reduced [2Fe-2S]-[ferredoxin] + O2 + 2 H(+) = 2-hydroxyspheroidene + 2 oxidized [2Fe-2S]-[ferredoxin] + H2O. It carries out the reaction 2-hydroxyspheroidene + 2 reduced [2Fe-2S]-[ferredoxin] + O2 + 2 H(+) = 2,2-dihydroxyspheroidene + 2 oxidized [2Fe-2S]-[ferredoxin] + H2O. The catalysed reaction is 2,2-dihydroxyspheroidene = spheroiden-2-one + H2O. It functions in the pathway carotenoid biosynthesis; spheroidene biosynthesis. Its function is as follows. Involved in the biosynthesis of the carotenoid spheroidene. Catalyzes the introduction of one keto group at the C-2 position of spheroidene. In vitro, can use nonnative substrates and produce oxocarotenoids with a hydroxy and/or a keto group, derived from neurosporene, lycopene, 3,4-didehydrolycopene or 3,4,3',4'-tetradehydrolycopene. The sequence is that of Spheroidene monooxygenase from Cereibacter sphaeroides (strain ATCC 17023 / DSM 158 / JCM 6121 / CCUG 31486 / LMG 2827 / NBRC 12203 / NCIMB 8253 / ATH 2.4.1.) (Rhodobacter sphaeroides).